The chain runs to 365 residues: Succinyl-diaminopimelate desuccinylase (365 aa).

Zn(2+) is bound at residue His64. The active site involves Asp66. A Zn(2+)-binding site is contributed by Asp95. Residue Glu125 is the Proton acceptor of the active site. Positions 126, 154, and 339 each coordinate Zn(2+).

It belongs to the peptidase M20A family. DapE subfamily. In terms of assembly, homodimer. The cofactor is Zn(2+). Co(2+) is required as a cofactor.

It catalyses the reaction N-succinyl-(2S,6S)-2,6-diaminopimelate + H2O = (2S,6S)-2,6-diaminopimelate + succinate. It functions in the pathway amino-acid biosynthesis; L-lysine biosynthesis via DAP pathway; LL-2,6-diaminopimelate from (S)-tetrahydrodipicolinate (succinylase route): step 3/3. Catalyzes the hydrolysis of N-succinyl-L,L-diaminopimelic acid (SDAP), forming succinate and LL-2,6-diaminopimelate (DAP), an intermediate involved in the bacterial biosynthesis of lysine and meso-diaminopimelic acid, an essential component of bacterial cell walls. The sequence is that of Succinyl-diaminopimelate desuccinylase from Campylobacter curvus (strain 525.92).